Consider the following 499-residue polypeptide: Probable cytosol aminopeptidase (499 aa).

Lysine 264 and aspartate 269 together coordinate Mn(2+). The active site involves lysine 276. Mn(2+) contacts are provided by aspartate 287, aspartate 346, and glutamate 348. Arginine 350 is a catalytic residue.

Belongs to the peptidase M17 family. The cofactor is Mn(2+).

The protein localises to the cytoplasm. It catalyses the reaction Release of an N-terminal amino acid, Xaa-|-Yaa-, in which Xaa is preferably Leu, but may be other amino acids including Pro although not Arg or Lys, and Yaa may be Pro. Amino acid amides and methyl esters are also readily hydrolyzed, but rates on arylamides are exceedingly low.. The catalysed reaction is Release of an N-terminal amino acid, preferentially leucine, but not glutamic or aspartic acids.. Presumably involved in the processing and regular turnover of intracellular proteins. Catalyzes the removal of unsubstituted N-terminal amino acids from various peptides. The chain is Probable cytosol aminopeptidase from Rhodopseudomonas palustris (strain BisB18).